A 282-amino-acid polypeptide reads, in one-letter code: Nucleotide-binding protein XCV3122 (282 aa).

Residue 5–12 (GLSGSGKS) participates in ATP binding. Residue 57–60 (DVRS) participates in GTP binding.

Belongs to the RapZ-like family.

Displays ATPase and GTPase activities. This chain is Nucleotide-binding protein XCV3122, found in Xanthomonas euvesicatoria pv. vesicatoria (strain 85-10) (Xanthomonas campestris pv. vesicatoria).